The chain runs to 238 residues: Probable transcriptional regulatory protein YeeN (238 aa).

The protein belongs to the TACO1 family. YeeN subfamily.

It is found in the cytoplasm. This Escherichia coli (strain UTI89 / UPEC) protein is Probable transcriptional regulatory protein YeeN.